The chain runs to 533 residues: Flavin-dependent halogenase armH4 (533 aa).

FAD is bound by residues Gly16, Ala19, and Glu49. 2 residues coordinate chloride: Ser337 and Gly338. Val339 is a binding site for FAD.

Belongs to the flavin-dependent halogenase family.

It carries out the reaction melleolide F + FADH2 + chloride + O2 = 6'-chloromelleolide F + FAD + 2 H2O + H(+). The enzyme catalyses melleolide F + bromide + FADH2 + O2 = 6'-bromomelleolide F + FAD + 2 H2O. Functionally, flavin-dependent halogenase involved in the biosynthesis of melleolides, a range of antifungal and phytotoxic polyketide derivatives composed of an orsellinic acid (OA) moiety esterified to various sesquiterpene alcohols. The halogenase catalyzes the transfer of a single chlorine atom to the melleolide backbone, resulting in a 6'-chloromelleolide product. The enzyme acts on free substrate and does not depend on carrier-protein-dependent acceptor molecules. Can also catalyze the transfer of a single bromine atom to the melleolide backbone in vitro. The polypeptide is Flavin-dependent halogenase armH4 (Armillaria mellea (Honey mushroom)).